A 148-amino-acid polypeptide reads, in one-letter code: Snaclec B4 (148 aa).

The N-terminal stretch at 1 to 24 (MGRIIFVSFGLLVVFLSLSGTGAA) is a signal peptide. 3 disulfides stabilise this stretch: C27/C38, C55/C144, and C121/C136. The 112-residue stretch at 34–145 (YDQHCYKVFD…CRLLGHFVCK (112 aa)) folds into the C-type lectin domain.

The protein belongs to the snaclec family. Heterodimer; disulfide-linked. Expressed by the venom gland.

Its subcellular location is the secreted. In terms of biological role, interferes with one step of hemostasis (modulation of platelet aggregation, or coagulation cascade, for example). This chain is Snaclec B4, found in Macrovipera lebetinus (Levantine viper).